A 326-amino-acid chain; its full sequence is Probable cell division protein WhiA (326 aa).

The H-T-H motif DNA-binding region spans 275–308 (SLDELGRLADPPMTKDAIAGRIRRLLAMADKRAS).

Belongs to the WhiA family.

In terms of biological role, involved in cell division and chromosome segregation. In Renibacterium salmoninarum (strain ATCC 33209 / DSM 20767 / JCM 11484 / NBRC 15589 / NCIMB 2235), this protein is Probable cell division protein WhiA.